Here is a 62-residue protein sequence, read N- to C-terminus: Large ribosomal subunit protein uL30 (62 aa).

The protein belongs to the universal ribosomal protein uL30 family. In terms of assembly, part of the 50S ribosomal subunit.

In Gluconobacter oxydans (strain 621H) (Gluconobacter suboxydans), this protein is Large ribosomal subunit protein uL30.